Reading from the N-terminus, the 300-residue chain is Ribosomal protein L11 methyltransferase (300 aa).

The S-adenosyl-L-methionine site is built by Thr141, Gly164, Asp186, and Asn233.

Belongs to the methyltransferase superfamily. PrmA family.

Its subcellular location is the cytoplasm. The catalysed reaction is L-lysyl-[protein] + 3 S-adenosyl-L-methionine = N(6),N(6),N(6)-trimethyl-L-lysyl-[protein] + 3 S-adenosyl-L-homocysteine + 3 H(+). In terms of biological role, methylates ribosomal protein L11. This Synechocystis sp. (strain ATCC 27184 / PCC 6803 / Kazusa) protein is Ribosomal protein L11 methyltransferase.